A 434-amino-acid chain; its full sequence is Methylenetetrahydrofolate--tRNA-(uracil-5-)-methyltransferase TrmFO (434 aa).

FAD is bound at residue 9-14; it reads GAGLAG.

The protein belongs to the MnmG family. TrmFO subfamily. The cofactor is FAD.

Its subcellular location is the cytoplasm. It carries out the reaction uridine(54) in tRNA + (6R)-5,10-methylene-5,6,7,8-tetrahydrofolate + NADH + H(+) = 5-methyluridine(54) in tRNA + (6S)-5,6,7,8-tetrahydrofolate + NAD(+). The enzyme catalyses uridine(54) in tRNA + (6R)-5,10-methylene-5,6,7,8-tetrahydrofolate + NADPH + H(+) = 5-methyluridine(54) in tRNA + (6S)-5,6,7,8-tetrahydrofolate + NADP(+). Catalyzes the folate-dependent formation of 5-methyl-uridine at position 54 (M-5-U54) in all tRNAs. The sequence is that of Methylenetetrahydrofolate--tRNA-(uracil-5-)-methyltransferase TrmFO from Listeria monocytogenes serotype 4b (strain F2365).